Reading from the N-terminus, the 169-residue chain is S-ribosylhomocysteine lyase (169 aa).

Histidine 54, histidine 58, and cysteine 128 together coordinate Fe cation.

It belongs to the LuxS family. Homodimer. Requires Fe cation as cofactor.

It carries out the reaction S-(5-deoxy-D-ribos-5-yl)-L-homocysteine = (S)-4,5-dihydroxypentane-2,3-dione + L-homocysteine. Its function is as follows. Involved in the synthesis of autoinducer 2 (AI-2) which is secreted by bacteria and is used to communicate both the cell density and the metabolic potential of the environment. The regulation of gene expression in response to changes in cell density is called quorum sensing. Catalyzes the transformation of S-ribosylhomocysteine (RHC) to homocysteine (HC) and 4,5-dihydroxy-2,3-pentadione (DPD). This is S-ribosylhomocysteine lyase from Shewanella piezotolerans (strain WP3 / JCM 13877).